Consider the following 492-residue polypeptide: MTHELFDSKGLLGSAPAAFVAGEYELDSSHGTLPVINPANGQLVAEVPSSSSSTVDRAVTAAVAAQREWGRRSHVARAAVLEAVRDAIAVHADELARIVSVEQGKPLSDARGETEGACAFFDFAISQKYRAVGSMMASEPGRSLGVREEPIGVVAAILPWNFPVAIFARKVAPALMAGNAVVLKPSELTPLSALALARLCRLAGVPDGLLSVVCGEGKDTGRALVTHPGVGMVTMTGSTRGGREILAQVADQIIPVSLELGGKAPFIVFEDADLDAAVEAAADARLWNTGQVCTCNEVTYVHADLHDEFVRRVVDRFASVTPLDPFAAGSRLGPLVAERERTRVQGMVDAAVAAGARVRTGGGRPDGEQYQSGAWFAPTVLTNVRPEMDIARREVFGPVLPIIPFDAEAEVVSAANSTAYGLTAYVYTRDLSRAMRMIDALEFGEVYVNQAGPEQVQGFHTGWKSSGLGGDDGPHGYEKYLRRKTVYVRHAV.

NADP(+) is bound by residues 160 to 161 (WN), 184 to 187 (KPSE), and 237 to 238 (GS). Glu-259 functions as the Proton acceptor in the catalytic mechanism. An NADP(+)-binding site is contributed by Leu-260. The Nucleophile role is filled by Cys-293. Glu-394 is a binding site for NADP(+).

Belongs to the aldehyde dehydrogenase family.

It catalyses the reaction 3,6-anhydro-alpha-L-galactopyranose + NADP(+) + H2O = 3,6-anhydro-L-galactonate + NADPH + 2 H(+). Its activity is regulated as follows. Significantly inhibited by EDTA. Activity is enhanced by Fe(2+), but is strongly inhibited by Mn(2+), Cu(2+), Zn(2+), Ni(2+) and Co(2+). In terms of biological role, involved in the degradation of 3,6-anhydro-L-galactose, which is the major monomeric sugar of red macroalgae. Catalyzes the oxidation of 3,6-anhydro-L-galactose (AHG) to form 3,6-anhydrogalactonate (AHGA). Shows broad substrate specificity, with maximum activity toward AHG. The enzyme activities toward D-fructose, D-galactose and D-ribose are between 40% and 50% of the maximum, but those toward L-rhamnose, L-glyceraldehyde, D-glyceraldehyde, L-fucose and D-glucose are much lower. The polypeptide is 3,6-anhydro-alpha-L-galactose dehydrogenase (Streptomyces coelicolor (strain ATCC BAA-471 / A3(2) / M145)).